Reading from the N-terminus, the 320-residue chain is Phosphoribosylaminoimidazole-succinocarboxamide synthase (320 aa).

Residues 283–303 (ESDWDRNSPPPPLPESIAHQT) are disordered.

The protein belongs to the SAICAR synthetase family.

The catalysed reaction is 5-amino-1-(5-phospho-D-ribosyl)imidazole-4-carboxylate + L-aspartate + ATP = (2S)-2-[5-amino-1-(5-phospho-beta-D-ribosyl)imidazole-4-carboxamido]succinate + ADP + phosphate + 2 H(+). The protein operates within purine metabolism; IMP biosynthesis via de novo pathway; 5-amino-1-(5-phospho-D-ribosyl)imidazole-4-carboxamide from 5-amino-1-(5-phospho-D-ribosyl)imidazole-4-carboxylate: step 1/2. This chain is Phosphoribosylaminoimidazole-succinocarboxamide synthase, found in Rhodopirellula baltica (strain DSM 10527 / NCIMB 13988 / SH1).